A 66-amino-acid polypeptide reads, in one-letter code: Large ribosomal subunit protein bL35 (66 aa).

This sequence belongs to the bacterial ribosomal protein bL35 family.

In Neorickettsia sennetsu (strain ATCC VR-367 / Miyayama) (Ehrlichia sennetsu), this protein is Large ribosomal subunit protein bL35.